A 486-amino-acid polypeptide reads, in one-letter code: Bifunctional protein HldE (486 aa).

Residues Met1–Ala331 are ribokinase. Position 208–211 (Asn208–Glu211) interacts with ATP. The active site involves Asp277. Residues Phe357–Ser486 form a cytidylyltransferase region.

This sequence in the N-terminal section; belongs to the carbohydrate kinase PfkB family. It in the C-terminal section; belongs to the cytidylyltransferase family. In terms of assembly, homodimer.

It carries out the reaction D-glycero-beta-D-manno-heptose 7-phosphate + ATP = D-glycero-beta-D-manno-heptose 1,7-bisphosphate + ADP + H(+). The enzyme catalyses D-glycero-beta-D-manno-heptose 1-phosphate + ATP + H(+) = ADP-D-glycero-beta-D-manno-heptose + diphosphate. Its pathway is nucleotide-sugar biosynthesis; ADP-L-glycero-beta-D-manno-heptose biosynthesis; ADP-L-glycero-beta-D-manno-heptose from D-glycero-beta-D-manno-heptose 7-phosphate: step 1/4. The protein operates within nucleotide-sugar biosynthesis; ADP-L-glycero-beta-D-manno-heptose biosynthesis; ADP-L-glycero-beta-D-manno-heptose from D-glycero-beta-D-manno-heptose 7-phosphate: step 3/4. Its function is as follows. Catalyzes the phosphorylation of D-glycero-D-manno-heptose 7-phosphate at the C-1 position to selectively form D-glycero-beta-D-manno-heptose-1,7-bisphosphate. Catalyzes the ADP transfer from ATP to D-glycero-beta-D-manno-heptose 1-phosphate, yielding ADP-D-glycero-beta-D-manno-heptose. This chain is Bifunctional protein HldE, found in Acidiphilium cryptum (strain JF-5).